The sequence spans 299 residues: Nucleotide-binding protein RER_30260 (299 aa).

19–26 (GLSGAGLS) is a binding site for ATP. Residue 70–73 (DVRS) participates in GTP binding.

It belongs to the RapZ-like family.

Displays ATPase and GTPase activities. The chain is Nucleotide-binding protein RER_30260 from Rhodococcus erythropolis (strain PR4 / NBRC 100887).